A 578-amino-acid polypeptide reads, in one-letter code: Peptidyl-prolyl cis-trans isomerase-like 2 (578 aa).

The 75-residue stretch at 40-114 folds into the U-box domain; that stretch reads RRLPFNFCAA…SDSLGAGLSD (75 aa). Residues 240–260 form a disordered region; the sequence is KAREQGGDVNRSSTALTKPTG. Residues 321-475 form the PPIase cyclophilin-type domain; that stretch reads ATGFARMETN…NKILIKDIVI (155 aa). The segment at 505 to 578 is disordered; the sequence is GTDDDKTTWT…GGGFGNFDNW (74 aa). Over residues 538 to 548 the composition is skewed to polar residues; the sequence is KTTTQQSTPTV. A compositionally biased stretch (acidic residues) spans 551-560; it reads ADLEDVDTWE. The span at 569 to 578 shows a compositional bias: gly residues; sequence GGGFGNFDNW.

The protein belongs to the cyclophilin-type PPIase family. PPIL2 subfamily.

Its subcellular location is the nucleus. It catalyses the reaction [protein]-peptidylproline (omega=180) = [protein]-peptidylproline (omega=0). It carries out the reaction S-ubiquitinyl-[E2 ubiquitin-conjugating enzyme]-L-cysteine + [acceptor protein]-L-lysine = [E2 ubiquitin-conjugating enzyme]-L-cysteine + N(6)-ubiquitinyl-[acceptor protein]-L-lysine.. It participates in protein modification; protein ubiquitination. May catalyze the cis-trans isomerization of proline imidic peptide bonds in oligopeptides thereby assisting the folding of proteins. May also function as a chaperone, playing a role in intracellular transport of proteins. May also have a protein ubiquitin ligase activity acting as an E3 ubiquitin protein ligase or as a ubiquitin-ubiquitin ligase promoting elongation of ubiquitin chains on proteins. The chain is Peptidyl-prolyl cis-trans isomerase-like 2 (CYP8) from Gibberella zeae (strain ATCC MYA-4620 / CBS 123657 / FGSC 9075 / NRRL 31084 / PH-1) (Wheat head blight fungus).